The primary structure comprises 301 residues: tRNA pseudouridine synthase B (301 aa).

Residue Asp-38 is the Nucleophile of the active site.

The protein belongs to the pseudouridine synthase TruB family. Type 1 subfamily.

It carries out the reaction uridine(55) in tRNA = pseudouridine(55) in tRNA. In terms of biological role, responsible for synthesis of pseudouridine from uracil-55 in the psi GC loop of transfer RNAs. This is tRNA pseudouridine synthase B from Lacticaseibacillus paracasei (strain ATCC 334 / BCRC 17002 / CCUG 31169 / CIP 107868 / KCTC 3260 / NRRL B-441) (Lactobacillus paracasei).